The sequence spans 116 residues: Large ribosomal subunit protein bL20 (116 aa).

Belongs to the bacterial ribosomal protein bL20 family.

Functionally, binds directly to 23S ribosomal RNA and is necessary for the in vitro assembly process of the 50S ribosomal subunit. It is not involved in the protein synthesizing functions of that subunit. This is Large ribosomal subunit protein bL20 from Nitratiruptor sp. (strain SB155-2).